Consider the following 459-residue polypeptide: Interleukin-7 receptor subunit alpha (459 aa).

Positions 1–20 (MMALGRAFAIVFCLIQAVSG) are cleaved as a signal peptide. Topologically, residues 21-239 (ESGNAQDGDL…PEPKNQGGWD (219 aa)) are extracellular. Cysteine 42 and cysteine 57 are disulfide-bonded. N-linked (GlcNAc...) asparagine glycosylation is present at asparagine 60. Intrachain disulfides connect cysteine 74–cysteine 82 and cysteine 108–cysteine 118. Asparagine 115 and asparagine 177 each carry an N-linked (GlcNAc...) asparagine glycan. In terms of domain architecture, Fibronectin type-III spans 131 to 232 (APSDLKVVYR…PSSTFETPEP (102 aa)). Residues 218 to 222 (WSEWS) carry the WSXWS motif motif. The chain crosses the membrane as a helical span at residues 240-264 (PVLPSVTILSLFSVFLLVILAHVLW). The Cytoplasmic portion of the chain corresponds to 265-459 (KKRIKPVVWP…VTMSSFYQNK (195 aa)). Positions 272 to 280 (VWPSLPDHK) match the Box 1 motif motif. A Phosphothreonine; by PKC modification is found at threonine 282. Disordered regions lie at residues 337–365 (TQGHRAAVHSANRSPETSVSPPETVRRES) and 378–413 (NAPPLLSSRSPDYRDGDRNRPPVYQDLLPNSGNTNV). Residues 347 to 357 (ANRSPETSVSP) are compositionally biased toward polar residues. Basic and acidic residues predominate over residues 388 to 397 (PDYRDGDRNR).

This sequence belongs to the type I cytokine receptor family. Type 4 subfamily. The IL7 receptor is a heterodimer of IL7R and IL2RG. The TSLP receptor is a heterodimer of CRLF2 and IL7R. Interacts with CD53. Post-translationally, N-glycosylated IL-7Ralpha binds IL7 300-fold more tightly than the unglycosylated form. In terms of processing, ubiquitinated by MARCHF8; leading to lysosomal degradation. In terms of tissue distribution, spleen, thymus and fetal liver.

It localises to the membrane. Receptor for interleukin-7. Also acts as a receptor for thymic stromal lymphopoietin (TSLP). In Mus musculus (Mouse), this protein is Interleukin-7 receptor subunit alpha (Il7r).